Here is a 2312-residue protein sequence, read N- to C-terminus: Protein Ycf2 (2312 aa).

3 disordered regions span residues 170-191, 223-253, and 942-1009; these read SSQL…GTED, TEIE…EMNN, and KRKK…KRKE. The span at 232-242 shows a compositional bias: low complexity; that stretch reads KGLSGSSSKSR. 2 stretches are compositionally biased toward basic and acidic residues: residues 243–252 and 950–1007; these read LFTEGEKEMN and KRKE…PEKR. 1439–1446 lines the ATP pocket; sequence GSIGSGRS. Disordered regions lie at residues 1513 to 1532, 1857 to 1983, and 2050 to 2166; these read YEDR…YEPG, LVGS…LLRP, and PAEE…DGFS. Positions 1863–1963 are enriched in acidic residues; sequence TEEEVEGTEE…GEGTEDEEVE (101 aa). Over residues 1964 to 1976 the composition is skewed to basic and acidic residues; sequence GTEKDSSQFDNDR. 2 stretches are compositionally biased toward acidic residues: residues 2050 to 2067 and 2074 to 2149; these read PAEE…EALE and GEEE…ENDS.

It belongs to the Ycf2 family.

It is found in the plastid. It localises to the chloroplast stroma. Functionally, probable ATPase of unknown function. Its presence in a non-photosynthetic plant (Epifagus virginiana) and experiments in tobacco indicate that it has an essential function which is probably not related to photosynthesis. This is Protein Ycf2 from Oenothera parviflora (Small-flowered evening primrose).